A 275-amino-acid polypeptide reads, in one-letter code: Putative carbamate hydrolase RutD (275 aa).

Belongs to the AB hydrolase superfamily. Hydrolase RutD family.

The enzyme catalyses carbamate + 2 H(+) = NH4(+) + CO2. Involved in pyrimidine catabolism. May facilitate the hydrolysis of carbamate, a reaction that can also occur spontaneously. This chain is Putative carbamate hydrolase RutD, found in Escherichia coli (strain UTI89 / UPEC).